Consider the following 422-residue polypeptide: Dihydroorotase (422 aa).

Zn(2+) is bound by residues H59 and H61. Substrate-binding positions include 61-63 (HFR) and N93. 3 residues coordinate Zn(2+): D150, H177, and H230. N276 is a binding site for substrate. Zn(2+) is bound at residue D303. Residue D303 is part of the active site. Position 307 (H307) interacts with substrate.

This sequence belongs to the metallo-dependent hydrolases superfamily. DHOase family. Class I DHOase subfamily. Zn(2+) serves as cofactor.

It catalyses the reaction (S)-dihydroorotate + H2O = N-carbamoyl-L-aspartate + H(+). It functions in the pathway pyrimidine metabolism; UMP biosynthesis via de novo pathway; (S)-dihydroorotate from bicarbonate: step 3/3. Catalyzes the reversible cyclization of carbamoyl aspartate to dihydroorotate. This is Dihydroorotase from Streptococcus pyogenes serotype M3 (strain ATCC BAA-595 / MGAS315).